A 1413-amino-acid chain; its full sequence is MKALLDLFKQVQQEEVFDAIKIGLASPDKIRSWSFGEVKKPETINYRTFKPERDGLFCAKIFGPIKDYECLCGKYKRLKHRGVICEKCGVEVTLAKVRRERMGHIELASPVAHIWFLKSLPSRLGMVLDMTLRDIERVLYFEAYVVIEPGMTPLKARQIMTEEDYYNKVEEYGDEFRAEMGAEGVRELLRAINIDEQVETLRTELKNTGSEAKIKKYAKRLKVLEAFQRSGIKPEWMILEVLPVLPPELRPLVPLDGGRFATSDLNDLYRRVINRNNRLKRLLELKAPEIIVRNEKRMLQEAVDSLLDNGRRGKAMTGANKRPLKSLADMIKGKGGRFRQNLLGKRVDYSGRSVIVVGPTLKLHQCGLPKLMALELFKPFIFNKLEVMGVATTIKAAKKEVENQTPVVWDILEEVIREHPVMLNRAPTLHRLGIQAFEPVLIEGKAIQLHPLVCAAFNADFDGDQMAVHVPLSLEAQMEARTLMLASNNVLFPANGDPSIVPSQDIVLGLYYATREAINGKGEGLSFTGVSEVIRAYENKEVELASRVNVRITEMVRNEDTSEGAPEFVPKITLYATTVGRAILSEILPHGLPFSVLNKPLKKKEISRLINTAFRKCGLRATVVFADQLMQSGFRLATRAGISICVDDMLVPPQKETIVGDAAKKVKEYDRQYMSGLVTAQERYNNVVDIWSATSEAVGKAMMEQLSTEPVIDRDGNETRQESFNSIYMMADSGARGSAVQIRQLAGMRGLMAKPDGSIIETPITANFREGLNVLQYFISTHGARKGLADTALKTANSGYLTRRLVDVTQDLVVVEDDCGTSNGVAMKALVEGGEVVEALRDRILGRVAVADVVNPETQETLYESGTLLDETAVEEIERLGIDEVRVRTPLTCETRYGLCAACYGRDLGRGSLVNVGEAVGVIAAQSIGEPGTQLTMRTFHIGGAASRAAVASSVEAKSNGIVRFTATMRYVTNAKGEQIVISRSGEAMITDDFGRERERHKVPYGATLLQLDGATIKAGTQLATWDPLTRPIITEYGGTVKFENVEEGVTVAKQIDDVTGLSTLVVIDVKRRGSQASKSVRPQVKLLDANGEEVKIPGTEHAVQIGFQVGALITVKDGQQVQVGEVLARIPTEAQKTRDITGGLPRVAELFEARSPKDAGILAEVTGTTSFGKDTKGKQRLVITDLEGNQHEFLIAKEKQVLVHDAQVVNKGEMIVDGPADPHDILRLQGIEALSRYIVDEVQDVYRLQGVKINDKHIEVIVRQMLRRVQITDNGDTRFIPGEQVERSDMLDENDRMIAEGKRPASYDNVLLGITKASLSTDSFISAASFQETTRVLTEAAIMGKRDDLRGLKENVIVGRLIPAGTGLAFHKARKAKESSDRERFDQIAAEEAFDFGTPSAPAEEPQHPAAE.

Zn(2+)-binding residues include Cys70, Cys72, Cys85, and Cys88. The Mg(2+) site is built by Asp460, Asp462, and Asp464. Cys819, Cys893, Cys900, and Cys903 together coordinate Zn(2+). Positions 1392-1413 (EEAFDFGTPSAPAEEPQHPAAE) are disordered.

The protein belongs to the RNA polymerase beta' chain family. As to quaternary structure, the RNAP catalytic core consists of 2 alpha, 1 beta, 1 beta' and 1 omega subunit. When a sigma factor is associated with the core the holoenzyme is formed, which can initiate transcription. Requires Mg(2+) as cofactor. Zn(2+) serves as cofactor.

It catalyses the reaction RNA(n) + a ribonucleoside 5'-triphosphate = RNA(n+1) + diphosphate. In terms of biological role, DNA-dependent RNA polymerase catalyzes the transcription of DNA into RNA using the four ribonucleoside triphosphates as substrates. The protein is DNA-directed RNA polymerase subunit beta' of Burkholderia cenocepacia (strain ATCC BAA-245 / DSM 16553 / LMG 16656 / NCTC 13227 / J2315 / CF5610) (Burkholderia cepacia (strain J2315)).